Reading from the N-terminus, the 229-residue chain is Cytidylate kinase (229 aa).

10–18 (GHSSSGKST) is an ATP binding site.

Belongs to the cytidylate kinase family. Type 1 subfamily.

The protein resides in the cytoplasm. The catalysed reaction is CMP + ATP = CDP + ADP. The enzyme catalyses dCMP + ATP = dCDP + ADP. This chain is Cytidylate kinase, found in Parabacteroides distasonis (strain ATCC 8503 / DSM 20701 / CIP 104284 / JCM 5825 / NCTC 11152).